Reading from the N-terminus, the 476-residue chain is WD repeat, SAM and U-box domain-containing protein 1 (476 aa).

WD repeat units follow at residues 10-47 (DHSD…ELPY), 52-91 (GHTY…MLAV), 95-134 (PTGS…FYRS), 137-176 (VKDG…LCNE), 178-227 (AHDL…FLGG), 237-276 (GHSA…ILHT), and 279-318 (QHTR…PCAG). Positions 333 to 396 (WSEDDVSAWL…LQKIEELRMK (64 aa)) constitute an SAM domain. In terms of domain architecture, U-box spans 403–476 (AVPDEFLCPI…ISRWLETQQK (74 aa)).

The protein is WD repeat, SAM and U-box domain-containing protein 1 (WDSUB1) of Gallus gallus (Chicken).